Reading from the N-terminus, the 383-residue chain is Acetyl-CoA acetyltransferase (383 aa).

Cys-85 serves as the catalytic Acyl-thioester intermediate. 4 residues coordinate CoA: Cys-206, Ser-207, Ile-209, and Lys-328. Residue His-332 is the Proton acceptor of the active site.

It belongs to the thiolase-like superfamily. Thiolase family. In terms of assembly, interacts with HMG-CoA synthase (HMGCS) that catalyzes the second step in the pathway and with a DUF35 protein. The acetoacetyl-CoA thiolase/HMG-CoA synthase complex channels the intermediate via a fused CoA-binding site, which allows for efficient coupling of the endergonic thiolase reaction with the exergonic HMGCS reaction.

It carries out the reaction 2 acetyl-CoA = acetoacetyl-CoA + CoA. It participates in metabolic intermediate biosynthesis; (R)-mevalonate biosynthesis; (R)-mevalonate from acetyl-CoA: step 1/3. Its function is as follows. Catalyzes the condensation of two acetyl-coA molecules into acetoacetyl-CoA. Functions in the mevalonate (MVA) pathway leading to isopentenyl diphosphate (IPP), a key precursor for the biosynthesis of isoprenoid compounds that are building blocks of archaeal membrane lipids. This chain is Acetyl-CoA acetyltransferase, found in Methanothermobacter thermautotrophicus (strain ATCC 29096 / DSM 1053 / JCM 10044 / NBRC 100330 / Delta H) (Methanobacterium thermoautotrophicum).